A 518-amino-acid polypeptide reads, in one-letter code: Alpha-ionylideneethane synthase abl3 (518 aa).

Disordered regions lie at residues 294–355 (AAPG…SVFE) and 440–466 (KAPPPPSPRRAVPADGEADSAAGQRSK). Over residues 299–339 (TSSDNSSDNRSSSISSTSSTGTDGSGAGDASSVHSSGVHSD) the composition is skewed to low complexity.

This sequence belongs to the alpha-ionylideneethane synthase family.

The protein operates within hormone biosynthesis. In terms of biological role, alpha-ionylideneethane synthase involved in the biosynthesis of abscisic acid (ABA), a phytohormone that acts antagonistically toward salicylic acid (SA), jasmonic acid (JA) and ethylene (ETH) signaling, to impede plant defense responses. During pathogen-host interaction, ABA plays a dual role in disease severity by increasing plant susceptibility and accelerating pathogenesis in the fungus itself. The first step of the pathway catalyzes the reaction from farnesyl diphosphate to alpha-ionylideneethane performed by the alpha-ionylideneethane synthase ABA3 via a three-step reaction mechanism involving 2 neutral intermediates, beta-farnesene and allofarnesene. The cytochrome P450 monooxygenase ABA1 might then be involved in the conversion of alpha-ionylideneethane to alpha-ionylideneacetic acid. Alpha-ionylideneacetic acid is further converted to abscisic acid in 2 steps involving the cytochrome P450 monooxygenase ABA2 and the short-chain dehydrogenase/reductase ABA4, via the intermediates 1'-deoxy-ABA or 1',4'-trans-diol-ABA, depending on the order of action of these 2 enzymes. ABA2 is responsible for the hydroxylation of carbon atom C-1' and ABA4 might be involved in the oxidation of the C-4' carbon atom. The chain is Alpha-ionylideneethane synthase abl3 from Pyricularia oryzae (strain Y34) (Rice blast fungus).